The chain runs to 82 residues: Small ribosomal subunit protein bS16 (82 aa).

The protein belongs to the bacterial ribosomal protein bS16 family.

The sequence is that of Small ribosomal subunit protein bS16 from Klebsiella pneumoniae subsp. pneumoniae (strain ATCC 700721 / MGH 78578).